Reading from the N-terminus, the 331-residue chain is Phenylalanine--tRNA ligase alpha subunit (331 aa).

Glutamate 252 is a binding site for Mg(2+).

It belongs to the class-II aminoacyl-tRNA synthetase family. Phe-tRNA synthetase alpha subunit type 1 subfamily. As to quaternary structure, tetramer of two alpha and two beta subunits. The cofactor is Mg(2+).

It is found in the cytoplasm. The enzyme catalyses tRNA(Phe) + L-phenylalanine + ATP = L-phenylalanyl-tRNA(Phe) + AMP + diphosphate + H(+). The sequence is that of Phenylalanine--tRNA ligase alpha subunit from Hahella chejuensis (strain KCTC 2396).